Here is a 171-residue protein sequence, read N- to C-terminus: uncharacterized protein (171 aa).

In terms of domain architecture, HTH marR-type spans 33–166 (AISIATNLYR…LTGLLRKVAD (134 aa)). The segment at residues 80 to 103 (TRKIAELSGISTATASNVIKTLEK) is a DNA-binding region (H-T-H motif).

This is an uncharacterized protein from Bacillus subtilis (strain 168).